The chain runs to 214 residues: dITP/XTP pyrophosphatase (214 aa).

Substrate is bound at residue 16 to 21 (THNPGK). The Mg(2+) site is built by Asp-48 and Asp-77. Asp-77 functions as the Proton acceptor in the catalytic mechanism. Substrate-binding positions include Ser-78, 163-166 (FGYD), Lys-186, and 198-199 (HR).

Belongs to the HAM1 NTPase family. Homodimer. Mg(2+) serves as cofactor.

It carries out the reaction XTP + H2O = XMP + diphosphate + H(+). The catalysed reaction is dITP + H2O = dIMP + diphosphate + H(+). The enzyme catalyses ITP + H2O = IMP + diphosphate + H(+). In terms of biological role, pyrophosphatase that catalyzes the hydrolysis of nucleoside triphosphates to their monophosphate derivatives, with a high preference for the non-canonical purine nucleotides XTP (xanthosine triphosphate), dITP (deoxyinosine triphosphate) and ITP. Seems to function as a house-cleaning enzyme that removes non-canonical purine nucleotides from the nucleotide pool, thus preventing their incorporation into DNA/RNA and avoiding chromosomal lesions. The protein is dITP/XTP pyrophosphatase of Bradyrhizobium sp. (strain BTAi1 / ATCC BAA-1182).